Reading from the N-terminus, the 180-residue chain is Large ribosomal subunit protein uL6 (180 aa).

It belongs to the universal ribosomal protein uL6 family. In terms of assembly, part of the 50S ribosomal subunit.

In terms of biological role, this protein binds to the 23S rRNA, and is important in its secondary structure. It is located near the subunit interface in the base of the L7/L12 stalk, and near the tRNA binding site of the peptidyltransferase center. This Borrelia hermsii (strain HS1 / DAH) protein is Large ribosomal subunit protein uL6.